A 447-amino-acid chain; its full sequence is Monocarboxylate transporter 11 (447 aa).

Residues Met-1–Gly-11 are Cytoplasmic-facing. 12 helical membrane-spanning segments follow: residues Gly-12–Leu-32, Ala-54–Leu-74, Ala-80–Phe-100, Leu-107–Leu-127, Val-139–Ala-159, Phe-162–His-182, Ala-219–Val-239, Gly-249–Ala-269, Leu-288–Val-308, Gly-330–Val-350, Gly-354–Leu-374, and Ala-383–Pro-403. Over Arg-404–Cys-447 the chain is Cytoplasmic.

Belongs to the major facilitator superfamily. Monocarboxylate porter (TC 2.A.1.13) family. As to quaternary structure, interacts with isoform 2 of BSG.

It is found in the endoplasmic reticulum membrane. The protein localises to the cell membrane. It catalyses the reaction pyruvate(out) + H(+)(out) = pyruvate(in) + H(+)(in). Proton-linked monocarboxylate transporter. It catalyzes the transport of pyruvate across the plasma membrane. Probably involved in hepatic lipid metabolism: overexpression results in an increase of triacylglycerol(TAG) levels, small increases in intracellular diacylglycerols and decreases in lysophosphatidylcholine, cholesterol ester and sphingomyelin lipids. This Mus musculus (Mouse) protein is Monocarboxylate transporter 11 (Slc16a11).